The primary structure comprises 580 residues: Trafficking protein particle complex subunit 14 (580 aa).

2 disordered regions span residues 95-134 (GSAGDQDADPPGGGDPGGGGLFRGCSPLLTHGQGPATSGG) and 480-533 (VSHP…RSGS). Gly residues predominate over residues 105 to 116 (PGGGDPGGGGLF). Ser-491 carries the phosphoserine modification. The span at 492 to 502 (RKSSPSSPAVR) shows a compositional bias: low complexity. Polar residues predominate over residues 512-525 (LGRSQSFSHQQPSR). Ser-517 bears the Phosphoserine mark. Thr-541 carries the post-translational modification Phosphothreonine. Ser-546 carries the phosphoserine modification.

Component of the multisubunit TRAPP II complex, which includes at least TRAPPC1, TRAPPC2, TRAPPC2L, TRAPPC3, TRAPPC4, TRAPPC5, TRAPPC6A/B, TRAPPC9, TRAPPC10 and TRAPPC14. TRAPPC9, TRAPPC10 and TRAPPC14 are specific subunits of the TRAPP II complex. Interacts with alpha-tubulin during mitosis. Interacts with RAB3IP (via the N-terminal region); this interaction mediates RAB3IP association with the TRAPP II complex. Interacts with TRAPPC10. Interacts with FBF1.

The protein resides in the cytoplasm. It is found in the cytoskeleton. The protein localises to the spindle. It localises to the vesicle. Its subcellular location is the midbody. Specific subunit of the TRAPP (transport protein particle) II complex, a highly conserved vesicle tethering complex that functions in late Golgi trafficking as a membrane tether. TRAPPC14 is dispensable for TRAPPII complex integrity but mediates RAB3IP preciliary vesicle trafficking to the mother centriole during ciliogenesis. Modulates YAP1 activity as transcriptional regulator. This is Trafficking protein particle complex subunit 14 from Mus musculus (Mouse).